Reading from the N-terminus, the 173-residue chain is Nicotinamide-nucleotide adenylyltransferase (173 aa).

It belongs to the archaeal NMN adenylyltransferase family.

It is found in the cytoplasm. The enzyme catalyses beta-nicotinamide D-ribonucleotide + ATP + H(+) = diphosphate + NAD(+). It participates in cofactor biosynthesis; NAD(+) biosynthesis; NAD(+) from nicotinamide D-ribonucleotide: step 1/1. In Methanosarcina barkeri (strain Fusaro / DSM 804), this protein is Nicotinamide-nucleotide adenylyltransferase.